The following is a 626-amino-acid chain: Polyphenol oxidase C, chloroplastic (626 aa).

Residues 1-83 constitute a chloroplast transit peptide; the sequence is MASLCSNSST…ANAIPLAASA (83 aa). 2 disulfides stabilise this stretch: cysteine 94-cysteine 110 and cysteine 109-cysteine 177. Cu cation-binding residues include histidine 176, histidine 194, histidine 203, histidine 324, histidine 328, and histidine 366. Positions 180-194 form a cross-link, 2'-(S-cysteinyl)-histidine (Cys-His); it reads CNGGYSIDGKVLQVH.

It belongs to the tyrosinase family. The cofactor is Cu(2+).

It localises to the plastid. The protein localises to the chloroplast thylakoid lumen. The catalysed reaction is 2 catechol + O2 = 2 1,2-benzoquinone + 2 H2O. Functionally, catalyzes the oxidation of mono- and o-diphenols to o-diquinones. This chain is Polyphenol oxidase C, chloroplastic, found in Solanum lycopersicum (Tomato).